A 531-amino-acid chain; its full sequence is HERV-H LTR-associating protein 1 (531 aa).

Positions 1-29 (MLGFLSRGPSMKLCMGLACVLSLWNTVSG) are cleaved as a signal peptide. N79, N143, and N161 each carry an N-linked (GlcNAc...) asparagine glycan. Disordered stretches follow at residues 231 to 289 (GTAR…RPPE) and 340 to 362 (EKKP…GTEE). Composition is skewed to polar residues over residues 232 to 269 (TART…SSPW) and 349 to 362 (ETRS…GTEE).

It localises to the secreted. This chain is HERV-H LTR-associating protein 1 (HHLA1), found in Homo sapiens (Human).